Reading from the N-terminus, the 412-residue chain is Docking protein 2 (412 aa).

The 111-residue stretch at 4 to 114 folds into the PH domain; the sequence is GAVKQGFLYL…WVQAICLLAF (111 aa). Residues 147–252 form the IRS-type PTB domain; that stretch reads PHKEFAVTMR…SAQKNAAPAT (106 aa). Residues 246-296 are disordered; sequence KNAAPATPQPQPATIPASLPRPDSPYSRPHDSLPPPSPTTPVPAPRPRGQE. A Phosphotyrosine modification is found at tyrosine 271. Over residues 277–291 the composition is skewed to pro residues; it reads SLPPPSPTTPVPAPR. Phosphotyrosine occurs at positions 299 and 345. The segment at 359–412 is disordered; that stretch reads SPQEPRGEAWRRQATADRDPAGLQHVQPAGQDFSASGWQPGTEYDNVVLKKGPK. Residues 361-378 are compositionally biased toward basic and acidic residues; the sequence is QEPRGEAWRRQATADRDP.

This sequence belongs to the DOK family. Type A subfamily. Interacts with phosphorylated RASGAP and EGFR. Interacts with RET and NCK. Interacts (via PH domain) with TEK/TIE2 (tyrosine phosphorylated). In terms of assembly, (Microbial infection) Interacts with Herpes simplex virus 1 (HHV-1) protein UL46; this interaction induces DOK2 phosphorylation and subsequent degradation. In terms of processing, on immunoreceptor stimulation, phosphorylated on C-terminal tyrosine residues. Phosphorylation on Tyr-345 is required for binding to the SH2 domain of NCK. Phosphorylation on both Tyr-271 and Tyr-299 is required for interaction with RASGAP. Phosphorylated on tyrosine residues by TEK/TIE2. In terms of tissue distribution, highly expressed in peripheral blood leukocytes, lymph nodes and spleen. Lower expression in thymus, bone marrow and fetal liver.

In terms of biological role, DOK proteins are enzymatically inert adaptor or scaffolding proteins. They provide a docking platform for the assembly of multimolecular signaling complexes. DOK2 may modulate the cellular proliferation induced by IL-4, as well as IL-2 and IL-3. May be involved in modulating Bcr-Abl signaling. Attenuates EGF-stimulated MAP kinase activation. The polypeptide is Docking protein 2 (DOK2) (Homo sapiens (Human)).